The following is a 192-amino-acid chain: dCTP deaminase, dUMP-forming (192 aa).

Residues 101–106 (KSSLGR), D119, 127–129 (TLE), Q148, Y162, and Q174 contribute to the dCTP site. E129 acts as the Proton donor/acceptor in catalysis. The interval 169–192 (SRYQGQRGPTPSRSWQSWRTWPTR) is disordered. Over residues 171–192 (YQGQRGPTPSRSWQSWRTWPTR) the composition is skewed to polar residues.

This sequence belongs to the dCTP deaminase family. Homotrimer.

The enzyme catalyses dCTP + 2 H2O = dUMP + NH4(+) + diphosphate. It functions in the pathway pyrimidine metabolism; dUMP biosynthesis; dUMP from dCTP: step 1/1. In terms of biological role, bifunctional enzyme that catalyzes both the deamination of dCTP to dUTP and the hydrolysis of dUTP to dUMP without releasing the toxic dUTP intermediate. The sequence is that of dCTP deaminase, dUMP-forming from Salinispora tropica (strain ATCC BAA-916 / DSM 44818 / JCM 13857 / NBRC 105044 / CNB-440).